A 738-amino-acid chain; its full sequence is 1,4-alpha-glucan branching enzyme GlgB (738 aa).

Asp399 serves as the catalytic Nucleophile. The active-site Proton donor is the Glu452.

Belongs to the glycosyl hydrolase 13 family. GlgB subfamily. Monomer.

The catalysed reaction is Transfers a segment of a (1-&gt;4)-alpha-D-glucan chain to a primary hydroxy group in a similar glucan chain.. Its pathway is glycan biosynthesis; glycogen biosynthesis. Its function is as follows. Catalyzes the formation of the alpha-1,6-glucosidic linkages in glycogen by scission of a 1,4-alpha-linked oligosaccharide from growing alpha-1,4-glucan chains and the subsequent attachment of the oligosaccharide to the alpha-1,6 position. The protein is 1,4-alpha-glucan branching enzyme GlgB of Chlamydia trachomatis serovar A (strain ATCC VR-571B / DSM 19440 / HAR-13).